We begin with the raw amino-acid sequence, 398 residues long: 1-deoxy-D-xylulose 5-phosphate reductoisomerase (398 aa).

Positions 11, 12, 13, 14, 38, 39, and 125 each coordinate NADPH. Lys-126 is a 1-deoxy-D-xylulose 5-phosphate binding site. Glu-127 lines the NADPH pocket. Asp-151 contacts Mn(2+). Positions 152, 153, 179, and 202 each coordinate 1-deoxy-D-xylulose 5-phosphate. Residue Glu-153 participates in Mn(2+) binding. Gly-208 serves as a coordination point for NADPH. 1-deoxy-D-xylulose 5-phosphate-binding residues include Ser-215, Asn-220, Lys-221, and Glu-224. Glu-224 is a Mn(2+) binding site.

It belongs to the DXR family. It depends on Mg(2+) as a cofactor. Mn(2+) is required as a cofactor.

It catalyses the reaction 2-C-methyl-D-erythritol 4-phosphate + NADP(+) = 1-deoxy-D-xylulose 5-phosphate + NADPH + H(+). It functions in the pathway isoprenoid biosynthesis; isopentenyl diphosphate biosynthesis via DXP pathway; isopentenyl diphosphate from 1-deoxy-D-xylulose 5-phosphate: step 1/6. In terms of biological role, catalyzes the NADPH-dependent rearrangement and reduction of 1-deoxy-D-xylulose-5-phosphate (DXP) to 2-C-methyl-D-erythritol 4-phosphate (MEP). This Burkholderia lata (strain ATCC 17760 / DSM 23089 / LMG 22485 / NCIMB 9086 / R18194 / 383) protein is 1-deoxy-D-xylulose 5-phosphate reductoisomerase.